Consider the following 104-residue polypeptide: Integration host factor subunit beta (104 aa).

This sequence belongs to the bacterial histone-like protein family. In terms of assembly, heterodimer of an alpha and a beta chain.

This protein is one of the two subunits of integration host factor, a specific DNA-binding protein that functions in genetic recombination as well as in transcriptional and translational control. The polypeptide is Integration host factor subunit beta (ihfB) (Neisseria gonorrhoeae).